A 740-amino-acid chain; its full sequence is Phosphoribosylformylglycinamidine synthase subunit PurL (740 aa).

Histidine 53 is an active-site residue. Tyrosine 56 and lysine 95 together coordinate ATP. Position 97 (glutamate 97) interacts with Mg(2+). Substrate contacts are provided by residues 98-101 (SHNH) and arginine 120. Histidine 99 acts as the Proton acceptor in catalysis. Aspartate 121 is a binding site for Mg(2+). Glutamine 244 lines the substrate pocket. Residue aspartate 274 participates in Mg(2+) binding. Residue 318 to 320 (ESQ) coordinates substrate. Residues aspartate 501 and glycine 538 each contribute to the ATP site. Position 539 (asparagine 539) interacts with Mg(2+). Serine 541 serves as a coordination point for substrate.

The protein belongs to the FGAMS family. As to quaternary structure, monomer. Part of the FGAM synthase complex composed of 1 PurL, 1 PurQ and 2 PurS subunits.

The protein resides in the cytoplasm. It carries out the reaction N(2)-formyl-N(1)-(5-phospho-beta-D-ribosyl)glycinamide + L-glutamine + ATP + H2O = 2-formamido-N(1)-(5-O-phospho-beta-D-ribosyl)acetamidine + L-glutamate + ADP + phosphate + H(+). It functions in the pathway purine metabolism; IMP biosynthesis via de novo pathway; 5-amino-1-(5-phospho-D-ribosyl)imidazole from N(2)-formyl-N(1)-(5-phospho-D-ribosyl)glycinamide: step 1/2. Part of the phosphoribosylformylglycinamidine synthase complex involved in the purines biosynthetic pathway. Catalyzes the ATP-dependent conversion of formylglycinamide ribonucleotide (FGAR) and glutamine to yield formylglycinamidine ribonucleotide (FGAM) and glutamate. The FGAM synthase complex is composed of three subunits. PurQ produces an ammonia molecule by converting glutamine to glutamate. PurL transfers the ammonia molecule to FGAR to form FGAM in an ATP-dependent manner. PurS interacts with PurQ and PurL and is thought to assist in the transfer of the ammonia molecule from PurQ to PurL. This is Phosphoribosylformylglycinamidine synthase subunit PurL from Lactobacillus delbrueckii subsp. bulgaricus (strain ATCC 11842 / DSM 20081 / BCRC 10696 / JCM 1002 / NBRC 13953 / NCIMB 11778 / NCTC 12712 / WDCM 00102 / Lb 14).